We begin with the raw amino-acid sequence, 513 residues long: Maturase K (513 aa).

The protein belongs to the intron maturase 2 family. MatK subfamily.

Its subcellular location is the plastid. It is found in the chloroplast. In terms of biological role, usually encoded in the trnK tRNA gene intron. Probably assists in splicing its own and other chloroplast group II introns. The protein is Maturase K of Eleusine indica (Goosegrass).